The sequence spans 363 residues: Phosphoserine aminotransferase (363 aa).

Residue Arg-42 participates in L-glutamate binding. Pyridoxal 5'-phosphate contacts are provided by residues 76 to 77 (GR), Trp-102, Thr-156, Asp-175, and Gln-198. Lys-199 is subject to N6-(pyridoxal phosphate)lysine. Residue 240–241 (NT) participates in pyridoxal 5'-phosphate binding.

This sequence belongs to the class-V pyridoxal-phosphate-dependent aminotransferase family. SerC subfamily. In terms of assembly, homodimer. It depends on pyridoxal 5'-phosphate as a cofactor.

The protein localises to the cytoplasm. The catalysed reaction is O-phospho-L-serine + 2-oxoglutarate = 3-phosphooxypyruvate + L-glutamate. It catalyses the reaction 4-(phosphooxy)-L-threonine + 2-oxoglutarate = (R)-3-hydroxy-2-oxo-4-phosphooxybutanoate + L-glutamate. It functions in the pathway amino-acid biosynthesis; L-serine biosynthesis; L-serine from 3-phospho-D-glycerate: step 2/3. The protein operates within cofactor biosynthesis; pyridoxine 5'-phosphate biosynthesis; pyridoxine 5'-phosphate from D-erythrose 4-phosphate: step 3/5. Catalyzes the reversible conversion of 3-phosphohydroxypyruvate to phosphoserine and of 3-hydroxy-2-oxo-4-phosphonooxybutanoate to phosphohydroxythreonine. This Shewanella sp. (strain W3-18-1) protein is Phosphoserine aminotransferase.